We begin with the raw amino-acid sequence, 592 residues long: MPSRTDPKMDRSGGRVRLKAHYGGDILITSVDPTTTFQDLCEEVRDMCGLHQQHPLTLKWVDSEGDPCTVSSQMELEEAFRLACQGRDEVLIIHVFPSIPEQPGMPCPGEDKSIYRRGARRWRKLYRANGHLFQAKRFNRRAYCGQCSERIWGLARQGYRCINCKLLVHKRCHVLVPLTCRRHMDSVMPSQEPPVDDKNDGVDLPSEETDGIAYISSSRKHDNIKDDSEDLKPVIDGVDGIKISQGLGLQDFDLIRVIGRGSYAKVLLVRLKKNDQIYAMKVVKKELVHDDEDIDWVQTEKHVFEQASSNPFLVGLHSCFQTTSRLFLVIEYVNGGDLMFHMQRQRKLPEEHARFYAAEICIALNFLHERGIIYRDLKLDNVLLDADGHIKLTDYGMCKEGLGPGDTTSTFCGTPNYIAPEILRGEEYGFSVDWWALGVLMFEMMAGRSPFDIITDNPDMNTEDYLFQVILEKPIRIPRFLSVKASHVLKGFLNKDPKERLGCRPQTGFSDIKSHAFFRSIDWDLLEKKQTLPPFQPQITDDYGLDNFDTQFTSEPVQLTPDDEDVIKRIDQSEFEGFEYINPLLLSAEESV.

The PB1 domain occupies 15–98 (RVRLKAHYGG…EVLIIHVFPS (84 aa)). The interval 79-145 (AFRLACQGRD…KRFNRRAYCG (67 aa)) is interaction with SQSTM1. The Phorbol-ester/DAG-type zinc-finger motif lies at 130–180 (GHLFQAKRFNRRAYCGQCSERIWGLARQGYRCINCKLLVHKRCHVLVPLTC). The region spanning 252 to 518 (FDLIRVIGRG…FSDIKSHAFF (267 aa)) is the Protein kinase domain. Residues 258-266 (IGRGSYAKV) and Lys-281 each bind ATP. Asp-376 (proton acceptor) is an active-site residue. Thr-410 carries the post-translational modification Phosphothreonine; by PDPK1 and PI3K. One can recognise an AGC-kinase C-terminal domain in the interval 519 to 590 (RSIDWDLLEK…INPLLLSAEE (72 aa)). At Thr-560 the chain carries Phosphothreonine. Phosphoserine is present on Ser-591.

It belongs to the protein kinase superfamily. AGC Ser/Thr protein kinase family. PKC subfamily. In terms of assembly, interacts with PARD6A, PARD6B and PARD6G. Part of a complex with PARD3, PARD6A or PARD6B or PARD6G and CDC42 or RAC1. Interacts with ADAP1/CENTA1. Forms a ternary complex with SQSTM1 and KCNAB2. Forms another ternary complex with SQSTM1 and GABRR3. Forms a complex with SQSTM1 and MAP2K5. Interacts (via the protein kinase domain) with WWC1. Forms a tripartite complex with WWC1 and DDR1, but predominantly in the absence of collagen. Component of the Par polarity complex, composed of at least phosphorylated PRKCZ, PARD3 and TIAM1. Interacts with PDPK1 (via N-terminal region). Interacts with WDFY2 (via WD repeats 1-3). Interacts with VAMP2. Forms a complex with WDFY2 and VAMP2. Interacts with APPL1. Interacts with WWC1, WWC2 and WWC3. Post-translationally, CDH5 is required for its phosphorylation at Thr-410. Phosphorylated by protein kinase PDPK1; phosphorylation is inhibited by the apoptotic C-terminal cleavage product of PKN2. Phosphorylation at Thr-410 by PI3K activates the kinase. In terms of tissue distribution, isoform 1: In brain, expressed in hippocampus, neocortex and cerebellum (at protein level). Also expressed in lung, liver, kidney, testis and to a lesser extent in pancreas, intestine and skin (at protein level). Isoform 2: Specifically expressed in brain where it localizes to the hippocampus, neocortex and cerebellum (at protein level).

The protein localises to the cytoplasm. Its subcellular location is the endosome. It localises to the cell junction. It is found in the membrane. It catalyses the reaction L-seryl-[protein] + ATP = O-phospho-L-seryl-[protein] + ADP + H(+). The catalysed reaction is L-threonyl-[protein] + ATP = O-phospho-L-threonyl-[protein] + ADP + H(+). With respect to regulation, atypical PKCs (PRKCI and PRKCZ) exhibit an elevated basal enzymatic activity (that may be due to the interaction with SMG1 or SQSTM1) and are not regulated by diacylglycerol, phosphatidylserine, phorbol esters or calcium ions. Two specific sites, Thr-410 (activation loop of the kinase domain) and Thr-560 (turn motif), need to be phosphorylated for its full activation. Phosphatidylinositol 3,4,5-trisphosphate might be a physiological activator. Isoform 2: Constitutively active. Functionally, calcium- and diacylglycerol-independent serine/threonine-protein kinase that functions in phosphatidylinositol 3-kinase (PI3K) pathway and mitogen-activated protein (MAP) kinase cascade, and is involved in NF-kappa-B activation, mitogenic signaling, cell proliferation, cell polarity, inflammatory response and maintenance of long-term potentiation (LTP). Upon lipopolysaccharide (LPS) treatment in macrophages, or following mitogenic stimuli, functions downstream of PI3K to activate MAP2K1/MEK1-MAPK1/ERK2 signaling cascade independently of RAF1 activation. Required for insulin-dependent activation of AKT3, but may function as an adapter rather than a direct activator. Upon insulin treatment may act as a downstream effector of PI3K and contribute to the activation of translocation of the glucose transporter SLC2A4/GLUT4 and subsequent glucose transport in adipocytes. In EGF-induced cells, binds and activates MAP2K5/MEK5-MAPK7/ERK5 independently of its kinase activity and can activate JUN promoter through MEF2C. Through binding with SQSTM1/p62, functions in interleukin-1 signaling and activation of NF-kappa-B with the specific adapters RIPK1 and TRAF6. Participates in TNF-dependent transactivation of NF-kappa-B by phosphorylating and activating IKBKB kinase, which in turn leads to the degradation of NF-kappa-B inhibitors. In migrating astrocytes, forms a cytoplasmic complex with PARD6A and is recruited by CDC42 to function in the establishment of cell polarity along with the microtubule motor and dynein. In association with FEZ1, stimulates neuronal differentiation in PC12 cells. In the inflammatory response, is required for the T-helper 2 (Th2) differentiation process, including interleukin production, efficient activation of JAK1 and the subsequent phosphorylation and nuclear translocation of STAT6. May be involved in development of allergic airway inflammation (asthma), a process dependent on Th2 immune response. In the NF-kappa-B-mediated inflammatory response, can relieve SETD6-dependent repression of NF-kappa-B target genes by phosphorylating the RELA subunit at 'Ser-311'. Phosphorylates VAMP2 in vitro. Phosphorylates and activates LRRK1, which phosphorylates RAB proteins involved in intracellular trafficking. Involved in late synaptic long term potentiation phase in CA1 hippocampal cells and long term memory maintenance. The protein is Protein kinase C zeta type (Prkcz) of Rattus norvegicus (Rat).